The chain runs to 544 residues: NAD(P)H-quinone oxidoreductase chain 4 (544 aa).

A run of 14 helical transmembrane segments spans residues 29–49 (FPWL…IPLV), 60–80 (WYAL…YLNG), 115–135 (LILL…PVTF), 139–159 (LFFF…AVQD), 161–181 (LLFF…LAIW), 193–213 (FILY…AMAF), 234–254 (GFQA…LPIV), 268–288 (TAPV…YALF), 302–322 (FAPL…LTSF), 339–359 (MGFV…GAML), 360–380 (QMIS…ATYD), 400–422 (MFAM…GFVS), 442–462 (IVID…LLSM), and 488–508 (IYII…PKLV).

The protein belongs to the complex I subunit 4 family.

Its subcellular location is the cellular thylakoid membrane. It catalyses the reaction a plastoquinone + NADH + (n+1) H(+)(in) = a plastoquinol + NAD(+) + n H(+)(out). The enzyme catalyses a plastoquinone + NADPH + (n+1) H(+)(in) = a plastoquinol + NADP(+) + n H(+)(out). Its function is as follows. NDH-1 shuttles electrons from NAD(P)H, via FMN and iron-sulfur (Fe-S) centers, to quinones in the respiratory chain. The immediate electron acceptor for the enzyme in this species is believed to be plastoquinone. Couples the redox reaction to proton translocation (for every two electrons transferred, four hydrogen ions are translocated across the cytoplasmic membrane), and thus conserves the redox energy in a proton gradient. This Synechococcus sp. (strain RCC307) protein is NAD(P)H-quinone oxidoreductase chain 4.